Consider the following 293-residue polypeptide: Proline iminopeptidase (293 aa).

The 250-residue stretch at 28–277 (KPLVLLHGGP…FSRHMPFVEE (250 aa)) folds into the AB hydrolase-1 domain. Ser-104 acts as the Nucleophile in catalysis. Asp-244 is an active-site residue. Catalysis depends on His-271, which acts as the Proton donor.

It belongs to the peptidase S33 family.

It carries out the reaction Release of N-terminal proline from a peptide.. Functionally, releases the N-terminal proline from various substrates. The sequence is that of Proline iminopeptidase from Clostridium botulinum (strain Hall / ATCC 3502 / NCTC 13319 / Type A).